The primary structure comprises 422 residues: MNNRGAVTDMISQLPEPLILQILGSLPTKVAITTSVLSKQWQSHWKMMPKLEFDSFLRRLDLENVTKCLLSHKAPVLQTFSLKVRLDRRNNAVDIGCLIGIAMTRNVRKLVLEVYFHRGTFTFPRSLYHCETLETLELILNVVMDVPPSVYLKSLKTLYLLAVDFKDDESVINLLSGCPNLQDLVMRRNSSSNVKTFTIAVPSLQRLAIHNGSGTPQHCGYTINTPSLKYLKLEGSKAFESFMVENVSELIEVNITDVSEIIDEKLRVFLTSVTRLSLALSPSVFTFPTGIIFNQLVYLEICTNKTSWWKLLPLMLHSSPKLQVLKLIDDTDGMNYVEASGEWNQPKNVPECLHHLEKFIWEGYKWKREEIEVAKYILKNTNRLKRAIFSLKGISSEDRLVVVEDLKSVVMATTNSCQFQFI.

The F-box domain maps to 8–60; it reads TDMISQLPEPLILQILGSLPTKVAITTSVLSKQWQSHWKMMPKLEFDSFLRRL. LRR repeat units lie at residues 132 to 153, 154 to 175, and 180 to 201; these read TLETLELILNVVMDVPPSVYLK, SLKTLYLLAVDFKDDESVINLL, and NLQDLVMRRNSSSNVKTFTIAV. One can recognise an FBD domain in the interval 342–391; the sequence is EWNQPKNVPECLHHLEKFIWEGYKWKREEIEVAKYILKNTNRLKRAIFSL.

The sequence is that of Putative FBD-associated F-box protein At1g55030 from Arabidopsis thaliana (Mouse-ear cress).